A 303-amino-acid polypeptide reads, in one-letter code: Protoheme IX farnesyltransferase 1 (303 aa).

9 helical membrane-spanning segments follow: residues 18–38 (PGIIMGNLISVAGGFLLAAQG), 42–62 (LTLMFATMIGLSLVVASGCAV), 91–111 (AVLSFGIGLGIIGFAMLAIFT), 114–134 (LAVLFAAIGYVVYVGVYSLYM), 139–159 (VYGTLVGSFSGAVPPVVGYCA), 169–189 (VILLLMFSLWQMPHSYAIAIF), 213–233 (LHIVLYIAVFAVVSALLPLAG), 235–255 (TGIAFMAVTFATSLWWLAMAL), and 274–294 (FSIITITALSVTMALDFQVVA).

The protein belongs to the UbiA prenyltransferase family. Protoheme IX farnesyltransferase subfamily.

It localises to the cell inner membrane. It carries out the reaction heme b + (2E,6E)-farnesyl diphosphate + H2O = Fe(II)-heme o + diphosphate. It functions in the pathway porphyrin-containing compound metabolism; heme O biosynthesis; heme O from protoheme: step 1/1. Converts heme B (protoheme IX) to heme O by substitution of the vinyl group on carbon 2 of heme B porphyrin ring with a hydroxyethyl farnesyl side group. The sequence is that of Protoheme IX farnesyltransferase 1 from Shewanella frigidimarina (strain NCIMB 400).